We begin with the raw amino-acid sequence, 343 residues long: Glucokinase (343 aa).

21–26 (ADVGGT) contributes to the ATP binding site.

This sequence belongs to the bacterial glucokinase family.

Its subcellular location is the cytoplasm. It catalyses the reaction D-glucose + ATP = D-glucose 6-phosphate + ADP + H(+). The chain is Glucokinase from Cupriavidus pinatubonensis (strain JMP 134 / LMG 1197) (Cupriavidus necator (strain JMP 134)).